Here is a 501-residue protein sequence, read N- to C-terminus: 2,3-bisphosphoglycerate-independent phosphoglycerate mutase (501 aa).

Mn(2+) contacts are provided by D10 and S60. S60 serves as the catalytic Phosphoserine intermediate. Residues H121, 151–152, R182, R188, 256–259, and K329 each bind substrate; these read RD and RPDR. Positions 394, 398, 435, 436, and 453 each coordinate Mn(2+).

This sequence belongs to the BPG-independent phosphoglycerate mutase family. Monomer. Requires Mn(2+) as cofactor.

It catalyses the reaction (2R)-2-phosphoglycerate = (2R)-3-phosphoglycerate. The protein operates within carbohydrate degradation; glycolysis; pyruvate from D-glyceraldehyde 3-phosphate: step 3/5. In terms of biological role, catalyzes the interconversion of 2-phosphoglycerate and 3-phosphoglycerate. This is 2,3-bisphosphoglycerate-independent phosphoglycerate mutase from Mycoplasmopsis synoviae (strain 53) (Mycoplasma synoviae).